The chain runs to 116 residues: Large ribosomal subunit protein bL19 (116 aa).

The protein belongs to the bacterial ribosomal protein bL19 family.

Its function is as follows. This protein is located at the 30S-50S ribosomal subunit interface and may play a role in the structure and function of the aminoacyl-tRNA binding site. The sequence is that of Large ribosomal subunit protein bL19 from Staphylococcus epidermidis (strain ATCC 35984 / DSM 28319 / BCRC 17069 / CCUG 31568 / BM 3577 / RP62A).